The primary structure comprises 310 residues: p-hydroxybenzoic acid efflux pump subunit AaeA (310 aa).

The helical transmembrane segment at 12 to 32 (AITVVLVILAFIAIFNAWVYY) threads the bilayer.

This sequence belongs to the membrane fusion protein (MFP) (TC 8.A.1) family.

The protein resides in the cell inner membrane. Its function is as follows. Forms an efflux pump with AaeB. The sequence is that of p-hydroxybenzoic acid efflux pump subunit AaeA from Escherichia coli O127:H6 (strain E2348/69 / EPEC).